The primary structure comprises 428 residues: Mitochondrial distribution and morphology protein 12 (428 aa).

The region spanning 1–387 (MSFDINWNQL…WPSWICIDMN (387 aa)) is the SMP-LTD domain. Disordered regions lie at residues 75-168 (VMNE…APPL) and 387-428 (NDDD…EAGE). Residues 81–96 (NDSKDEHLKNHGDGIN) are compositionally biased toward basic and acidic residues. A compositionally biased stretch (acidic residues) spans 106–133 (LDDEDEDDEDDDEDDEDEEEEDEDDYDD). Residues 146–161 (LNFNENSTTPSANSFA) are compositionally biased toward polar residues. Positions 387-403 (NDDDDEEEEEEESEDND) are enriched in acidic residues. Residues 412-428 (NDGKHGDGRTDETEAGE) show a composition bias toward basic and acidic residues.

It belongs to the MDM12 family. Component of the ER-mitochondria encounter structure (ERMES) or MDM complex, composed of MMM1, MDM10, MDM12 and MDM34. An MMM1 homodimer associates with one molecule of MDM12 on each side in a pairwise head-to-tail manner, and the SMP-LTD domains of MMM1 and MDM12 generate a continuous hydrophobic tunnel for phospholipid trafficking.

The protein resides in the mitochondrion outer membrane. The protein localises to the endoplasmic reticulum membrane. In terms of biological role, component of the ERMES/MDM complex, which serves as a molecular tether to connect the endoplasmic reticulum (ER) and mitochondria. Components of this complex are involved in the control of mitochondrial shape and protein biogenesis, and function in nonvesicular lipid trafficking between the ER and mitochondria. MDM12 is required for the interaction of the ER-resident membrane protein MMM1 and the outer mitochondrial membrane-resident beta-barrel protein MDM10. The MDM12-MMM1 subcomplex functions in the major beta-barrel assembly pathway that is responsible for biogenesis of all mitochondrial outer membrane beta-barrel proteins, and acts in a late step after the SAM complex. The MDM10-MDM12-MMM1 subcomplex further acts in the TOM40-specific pathway after the action of the MDM12-MMM1 complex. Essential for establishing and maintaining the structure of mitochondria and maintenance of mtDNA nucleoids. This is Mitochondrial distribution and morphology protein 12 from Candida albicans (strain SC5314 / ATCC MYA-2876) (Yeast).